The primary structure comprises 482 residues: Peptide chain release factor PrfB2, chloroplastic (482 aa).

Residues 1-21 (MLSLIIRRSRSRFIIHGIKIS) constitute a chloroplast transit peptide.

The protein belongs to the prokaryotic/mitochondrial release factor family.

The protein resides in the plastid. It localises to the chloroplast stroma. Functionally, directs the termination of translation in response to the peptide chain termination codon UGA. Required for the proper translation, stability and normal processing of UGA-containing polycistronic transcripts in chloroplasts. This is Peptide chain release factor PrfB2, chloroplastic from Arabidopsis thaliana (Mouse-ear cress).